A 112-amino-acid chain; its full sequence is 2Fe-2S ferredoxin (112 aa).

Positions 5-107 (IKVTFIINDG…GIKVHLPAAT (103 aa)) constitute a 2Fe-2S ferredoxin-type domain. [2Fe-2S] cluster contacts are provided by cysteine 42, cysteine 48, cysteine 51, and cysteine 88.

This sequence belongs to the adrenodoxin/putidaredoxin family. [2Fe-2S] cluster is required as a cofactor.

In terms of biological role, ferredoxin are iron-sulfur proteins that transfer electrons in a wide variety of metabolic reactions. This Rickettsia rickettsii protein is 2Fe-2S ferredoxin (fdxB).